We begin with the raw amino-acid sequence, 464 residues long: L-2-hydroxyglutarate dehydrogenase, mitochondrial (464 aa).

The transit peptide at 1–52 (MWPTLRYVGGVCGLARYCVAGGFLRASGPASGVPGLLCGGGRRSSSTSSFDI) directs the protein to the mitochondrion. 2 positions are modified to N6-acetyllysine: Lys-105 and Lys-174.

This sequence belongs to the L2HGDH family. The cofactor is FAD.

The protein resides in the mitochondrion. The enzyme catalyses (S)-2-hydroxyglutarate + A = 2-oxoglutarate + AH2. The sequence is that of L-2-hydroxyglutarate dehydrogenase, mitochondrial (L2hgdh) from Mus musculus (Mouse).